The sequence spans 340 residues: HTH-type transcriptional regulator CelR (340 aa).

Residues 1–61 form the HTH lacI-type domain; it reads MERRRRPTLE…PNRAARTLVT (61 aa). A DNA-binding region (H-T-H motif) is located at residues 9–28; the sequence is LEMVAALAGVGRGTVSRVIN.

It localises to the cytoplasm. Its activity is regulated as follows. Activity is controlled by cytoplasmic cellobiose levels. Binding of CelR to the celE promoter is inhibited specifically by low concentrations of cellobiose, the major end product of cellulases. Activity may also be regulated through post-translational modification. Its function is as follows. Transcriptional regulator that regulates the expression of all six cellulases, encoded by the cel genes (designated celA through celF). Acts as a repressor. Specifically binds to a 14-bp inverted repeat site, which is present in the upstream region of the cellulase genes. This chain is HTH-type transcriptional regulator CelR, found in Thermobifida fusca (Thermomonospora fusca).